The following is a 289-amino-acid chain: Release factor glutamine methyltransferase (289 aa).

S-adenosyl-L-methionine is bound by residues 130 to 134 (GTGTG), D153, W182, and N196. 196 to 199 (NPPY) serves as a coordination point for substrate.

It belongs to the protein N5-glutamine methyltransferase family. PrmC subfamily.

The enzyme catalyses L-glutaminyl-[peptide chain release factor] + S-adenosyl-L-methionine = N(5)-methyl-L-glutaminyl-[peptide chain release factor] + S-adenosyl-L-homocysteine + H(+). Methylates the class 1 translation termination release factors RF1/PrfA and RF2/PrfB on the glutamine residue of the universally conserved GGQ motif. This chain is Release factor glutamine methyltransferase, found in Agrobacterium fabrum (strain C58 / ATCC 33970) (Agrobacterium tumefaciens (strain C58)).